A 110-amino-acid polypeptide reads, in one-letter code: Flagellar hook-basal body complex protein FliE (110 aa).

The protein belongs to the FliE family.

It localises to the bacterial flagellum basal body. This Pseudomonas entomophila (strain L48) protein is Flagellar hook-basal body complex protein FliE.